Here is a 30-residue protein sequence, read N- to C-terminus: SVDFNSESTRREEKQKEIVDLHNXLRDXVX.

This sequence belongs to the CRISP family. In terms of processing, contains 8 disulfide bonds. Expressed by the venom gland.

It is found in the secreted. In terms of biological role, inhibits calcium-activated potassium channels (KCa), voltage-gated potassium channel (Kv), and the calcium release channel/ryanodine receptor (RyR). This Hemachatus haemachatus (Rinkhals) protein is Cysteine-rich venom protein hematin.